Reading from the N-terminus, the 426-residue chain is Serine--tRNA ligase (426 aa).

229–231 (TAE) lines the L-serine pocket. ATP-binding positions include 260 to 262 (RKE) and valine 276. Residue glutamate 283 coordinates L-serine. Position 349-352 (349-352 (EVTS)) interacts with ATP. Threonine 384 provides a ligand contact to L-serine.

This sequence belongs to the class-II aminoacyl-tRNA synthetase family. Type-1 seryl-tRNA synthetase subfamily. In terms of assembly, homodimer. The tRNA molecule binds across the dimer.

The protein localises to the cytoplasm. It carries out the reaction tRNA(Ser) + L-serine + ATP = L-seryl-tRNA(Ser) + AMP + diphosphate + H(+). It catalyses the reaction tRNA(Sec) + L-serine + ATP = L-seryl-tRNA(Sec) + AMP + diphosphate + H(+). The protein operates within aminoacyl-tRNA biosynthesis; selenocysteinyl-tRNA(Sec) biosynthesis; L-seryl-tRNA(Sec) from L-serine and tRNA(Sec): step 1/1. Catalyzes the attachment of serine to tRNA(Ser). Is also able to aminoacylate tRNA(Sec) with serine, to form the misacylated tRNA L-seryl-tRNA(Sec), which will be further converted into selenocysteinyl-tRNA(Sec). In Treponema pallidum (strain Nichols), this protein is Serine--tRNA ligase.